The sequence spans 348 residues: Holliday junction branch migration complex subunit RuvB (348 aa).

Residues 1–20 are disordered; sequence MKPPARMVSPERRSDDVGDT. A large ATPase domain (RuvB-L) region spans residues 1-183; that stretch reads MKPPARMVSP…FGIPIRLNFY (183 aa). ATP-binding positions include Leu-22, Arg-23, Gly-64, Lys-67, Thr-68, Thr-69, 130–132, Arg-173, Tyr-183, and Arg-220; that span reads EDF. A Mg(2+)-binding site is contributed by Thr-68. The tract at residues 184–254 is small ATPAse domain (RuvB-S); sequence TVEELEGIVT…IADHALSALE (71 aa). The interval 257-348 is head domain (RuvB-H); the sequence is AAGLDAMDRR…FGLFGSEDDA (92 aa). Residues Arg-293, Arg-312, and Arg-317 each contribute to the DNA site.

It belongs to the RuvB family. In terms of assembly, homohexamer. Forms an RuvA(8)-RuvB(12)-Holliday junction (HJ) complex. HJ DNA is sandwiched between 2 RuvA tetramers; dsDNA enters through RuvA and exits via RuvB. An RuvB hexamer assembles on each DNA strand where it exits the tetramer. Each RuvB hexamer is contacted by two RuvA subunits (via domain III) on 2 adjacent RuvB subunits; this complex drives branch migration. In the full resolvosome a probable DNA-RuvA(4)-RuvB(12)-RuvC(2) complex forms which resolves the HJ.

It localises to the cytoplasm. The enzyme catalyses ATP + H2O = ADP + phosphate + H(+). Functionally, the RuvA-RuvB-RuvC complex processes Holliday junction (HJ) DNA during genetic recombination and DNA repair, while the RuvA-RuvB complex plays an important role in the rescue of blocked DNA replication forks via replication fork reversal (RFR). RuvA specifically binds to HJ cruciform DNA, conferring on it an open structure. The RuvB hexamer acts as an ATP-dependent pump, pulling dsDNA into and through the RuvAB complex. RuvB forms 2 homohexamers on either side of HJ DNA bound by 1 or 2 RuvA tetramers; 4 subunits per hexamer contact DNA at a time. Coordinated motions by a converter formed by DNA-disengaged RuvB subunits stimulates ATP hydrolysis and nucleotide exchange. Immobilization of the converter enables RuvB to convert the ATP-contained energy into a lever motion, pulling 2 nucleotides of DNA out of the RuvA tetramer per ATP hydrolyzed, thus driving DNA branch migration. The RuvB motors rotate together with the DNA substrate, which together with the progressing nucleotide cycle form the mechanistic basis for DNA recombination by continuous HJ branch migration. Branch migration allows RuvC to scan DNA until it finds its consensus sequence, where it cleaves and resolves cruciform DNA. This chain is Holliday junction branch migration complex subunit RuvB, found in Bradyrhizobium sp. (strain BTAi1 / ATCC BAA-1182).